The sequence spans 145 residues: Methylglyoxal synthase (145 aa).

One can recognise an MGS-like domain in the interval 1–145 (MNSKKKIALV…YYQKIRKDNF (145 aa)). Substrate is bound by residues histidine 12, lysine 16, 38 to 41 (TGTT), and 58 to 59 (SG). The active-site Proton donor/acceptor is aspartate 64. Histidine 91 contributes to the substrate binding site.

Belongs to the methylglyoxal synthase family.

The catalysed reaction is dihydroxyacetone phosphate = methylglyoxal + phosphate. In terms of biological role, catalyzes the formation of methylglyoxal from dihydroxyacetone phosphate. This Clostridium acetobutylicum (strain ATCC 824 / DSM 792 / JCM 1419 / IAM 19013 / LMG 5710 / NBRC 13948 / NRRL B-527 / VKM B-1787 / 2291 / W) protein is Methylglyoxal synthase.